The following is a 353-amino-acid chain: Photosystem II protein D1 (353 aa).

Threonine 2 is modified (N-acetylthreonine). Threonine 2 carries the phosphothreonine modification. 3 helical membrane-spanning segments follow: residues 29–46, 118–133, and 142–156; these read YIGW…TATS, HFLL…EWEL, and WIAI…AATA. Residue histidine 118 coordinates chlorophyll a. Residue tyrosine 126 participates in pheophytin a binding. Positions 170 and 189 each coordinate [CaMn4O5] cluster. The chain crosses the membrane as a helical span at residues 197-218; it reads FHMLGVAGVFGGSLFSAMHGSL. Position 198 (histidine 198) interacts with chlorophyll a. Residues histidine 215 and 264–265 each bind a quinone; that span reads SF. Histidine 215 contributes to the Fe cation binding site. Residue histidine 272 coordinates Fe cation. A helical transmembrane segment spans residues 274–288; that stretch reads FLAAWPVIGIWFTAL. Residues histidine 332, glutamate 333, aspartate 342, and alanine 344 each contribute to the [CaMn4O5] cluster site. The propeptide occupies 345 to 353; that stretch reads TFEVSATNA.

It belongs to the reaction center PufL/M/PsbA/D family. In terms of assembly, PSII is composed of 1 copy each of membrane proteins PsbA, PsbB, PsbC, PsbD, PsbE, PsbF, PsbH, PsbI, PsbJ, PsbK, PsbL, PsbM, PsbT, PsbX, PsbY, PsbZ, Psb30/Ycf12, at least 3 peripheral proteins of the oxygen-evolving complex and a large number of cofactors. It forms dimeric complexes. Requires The D1/D2 heterodimer binds P680, chlorophylls that are the primary electron donor of PSII, and subsequent electron acceptors. It shares a non-heme iron and each subunit binds pheophytin, quinone, additional chlorophylls, carotenoids and lipids. D1 provides most of the ligands for the Mn4-Ca-O5 cluster of the oxygen-evolving complex (OEC). There is also a Cl(-1) ion associated with D1 and D2, which is required for oxygen evolution. The PSII complex binds additional chlorophylls, carotenoids and specific lipids. as cofactor. In terms of processing, tyr-161 forms a radical intermediate that is referred to as redox-active TyrZ, YZ or Y-Z. Post-translationally, C-terminally processed by CTPA; processing is essential to allow assembly of the oxygen-evolving complex and thus photosynthetic growth.

The protein localises to the plastid membrane. The enzyme catalyses 2 a plastoquinone + 4 hnu + 2 H2O = 2 a plastoquinol + O2. Its function is as follows. Photosystem II (PSII) is a light-driven water:plastoquinone oxidoreductase that uses light energy to abstract electrons from H(2)O, generating O(2) and a proton gradient subsequently used for ATP formation. It consists of a core antenna complex that captures photons, and an electron transfer chain that converts photonic excitation into a charge separation. The D1/D2 (PsbA/PsbD) reaction center heterodimer binds P680, the primary electron donor of PSII as well as several subsequent electron acceptors. The chain is Photosystem II protein D1 from Cuscuta gronovii (Common dodder).